A 96-amino-acid chain; its full sequence is Protein Vpr (96 aa).

The segment at 1–42 (MEQAPEDQGPQREPYNEWALELLEELKQEAVRHFPRPWLHNL) is homooligomerization. Phosphoserine; by host occurs at positions 79, 94, and 96.

Belongs to the HIV-1 VPR protein family. Homooligomer, may form homodimer. Interacts with p6-gag region of the Pr55 Gag precursor protein through a (Leu-X-X)4 motif near the C-terminus of the P6gag protein. Interacts with host UNG. May interact with host RAD23A/HHR23A. Interacts with host VPRBP/DCAF1, leading to hijack the CUL4A-RBX1-DDB1-DCAF1/VPRBP complex, mediating ubiquitination of host proteins such as TERT and ZGPAT and arrest of the cell cycle in G2 phase. Post-translationally, phosphorylated on several residues by host. These phosphorylations regulate VPR activity for the nuclear import of the HIV-1 pre-integration complex.

The protein localises to the virion. It localises to the host nucleus. The protein resides in the host extracellular space. Functionally, during virus replication, may deplete host UNG protein, and incude G2-M cell cycle arrest. Acts by targeting specific host proteins for degradation by the 26S proteasome, through association with the cellular CUL4A-DDB1 E3 ligase complex by direct interaction with host VPRPB/DCAF-1. Cell cycle arrest reportedly occurs within hours of infection and is not blocked by antiviral agents, suggesting that it is initiated by the VPR carried into the virion. Additionally, VPR induces apoptosis in a cell cycle dependent manner suggesting that these two effects are mechanistically linked. Detected in the serum and cerebrospinal fluid of AIDS patient, VPR may also induce cell death to bystander cells. In terms of biological role, during virus entry, plays a role in the transport of the viral pre-integration (PIC) complex to the host nucleus. This function is crucial for viral infection of non-dividing macrophages. May act directly at the nuclear pore complex, by binding nucleoporins phenylalanine-glycine (FG)-repeat regions. This is Protein Vpr from Homo sapiens (Human).